Consider the following 296-residue polypeptide: Complex I intermediate-associated protein 30, mitochondrial (296 aa).

The transit peptide at 1-29 directs the protein to the mitochondrion; the sequence is MNSLLRQGLRLGCCLPAVQQQIHTTAVHR.

This sequence belongs to the CIA30 family. As to quaternary structure, associates with mitochondrial complex I assembly intermediates during its biogenesis.

Its subcellular location is the mitochondrion. Its function is as follows. Chaperone protein involved in the assembly of the mitochondrial NADH:ubiquinone oxidoreductase complex (complex I). The sequence is that of Complex I intermediate-associated protein 30, mitochondrial from Drosophila melanogaster (Fruit fly).